We begin with the raw amino-acid sequence, 341 residues long: DNA-directed RNA polymerase subunit alpha (341 aa).

The segment at 1–233 (MIQDEVPVSA…DLFLPFLHTE (233 aa)) is alpha N-terminal domain (alpha-NTD). Positions 262–341 (DRMAKEVAFK…NLPRNKFSID (80 aa)) are alpha C-terminal domain (alpha-CTD).

The protein belongs to the RNA polymerase alpha chain family. In plastids the minimal PEP RNA polymerase catalytic core is composed of four subunits: alpha, beta, beta', and beta''. When a (nuclear-encoded) sigma factor is associated with the core the holoenzyme is formed, which can initiate transcription.

The protein localises to the plastid. Its subcellular location is the chloroplast. The enzyme catalyses RNA(n) + a ribonucleoside 5'-triphosphate = RNA(n+1) + diphosphate. In terms of biological role, DNA-dependent RNA polymerase catalyzes the transcription of DNA into RNA using the four ribonucleoside triphosphates as substrates. This Angiopteris evecta (Mule's foot fern) protein is DNA-directed RNA polymerase subunit alpha.